We begin with the raw amino-acid sequence, 638 residues long: Cell division control protein 45 homolog (638 aa).

The disordered stretch occupies residues glutamate 151–glutamate 204. Acidic residues predominate over residues serine 153–aspartate 170. The segment covering arginine 190–glutamate 204 has biased composition (basic and acidic residues).

Belongs to the CDC45 family. As to quaternary structure, interacts with sld3.

The protein resides in the nucleus. Its function is as follows. Required for initiation of chromosomal DNA replication. May have a role in regulating the MCM proteins nda1 and nda4. This chain is Cell division control protein 45 homolog (sna41), found in Schizosaccharomyces pombe (strain 972 / ATCC 24843) (Fission yeast).